We begin with the raw amino-acid sequence, 125 residues long: Secreted RxLR effector protein 22 (125 aa).

The first 26 residues, 1-26 (MRLIYSALVTAAAMVAISNGSTPARG), serve as a signal peptide directing secretion. The tract at residues 21-66 (STPARGNEVETRSLRGGNEVDSSMSDDGERAARGGGRVRSQASGVT) is disordered. The RxLR-dEER signature appears at 32-50 (RSLRGGNEVDSSMSDDGER).

Belongs to the RxLR effector family.

It is found in the secreted. Its subcellular location is the host nucleus. Functionally, effector that acts as a broad suppressor of cell death to interrupt plant immunity. Inhibits cell death induced by cell death-inducing proteins, including the PAMP elicitor INF1 from P.infestans. The polypeptide is Secreted RxLR effector protein 22 (Plasmopara viticola (Downy mildew of grapevine)).